A 339-amino-acid chain; its full sequence is Fructose-1,6-bisphosphatase, cytosolic (339 aa).

5 residues coordinate Mg(2+): E70, E99, D120, L122, and D123. Substrate is bound by residues 123 to 126 (DGSS), N214, Y246, Y266, and K276. Residue E282 participates in Mg(2+) binding.

Belongs to the FBPase class 1 family. The cofactor is Mg(2+).

It is found in the cytoplasm. It carries out the reaction beta-D-fructose 1,6-bisphosphate + H2O = beta-D-fructose 6-phosphate + phosphate. The sequence is that of Fructose-1,6-bisphosphatase, cytosolic from Brassica napus (Rape).